The following is a 141-amino-acid chain: Hemoglobin subunit alpha (141 aa).

A Globin domain is found at 1-141 (VLSPADKTNI…VSTVLTSKYR (141 aa)). Residue Ser-3 is modified to Phosphoserine. Lys-7 carries the post-translational modification N6-succinyllysine. Thr-8 bears the Phosphothreonine mark. An N6-succinyllysine modification is found at Lys-11. Residue Lys-16 is modified to N6-acetyllysine; alternate. Lys-16 carries the post-translational modification N6-succinyllysine; alternate. At Tyr-24 the chain carries Phosphotyrosine. Position 35 is a phosphoserine (Ser-35). Residue Lys-40 is modified to N6-succinyllysine. Ser-49 carries the post-translational modification Phosphoserine. Residue His-58 coordinates O2. His-87 serves as a coordination point for heme b. A Phosphoserine modification is found at Ser-102. Thr-108 carries the post-translational modification Phosphothreonine. A Phosphoserine modification is found at Ser-124. Phosphothreonine occurs at positions 134 and 137. Ser-138 carries the phosphoserine modification.

This sequence belongs to the globin family. In terms of assembly, heterotetramer of two alpha chains and two beta chains. As to expression, red blood cells.

Involved in oxygen transport from the lung to the various peripheral tissues. Functionally, hemopressin acts as an antagonist peptide of the cannabinoid receptor CNR1. Hemopressin-binding efficiently blocks cannabinoid receptor CNR1 and subsequent signaling. The chain is Hemoglobin subunit alpha (HBA) from Canis lupus familiaris (Dog).